An 87-amino-acid polypeptide reads, in one-letter code: uncharacterized protein (87 aa).

2 helical membrane passes run 7 to 27 and 64 to 84; these read LFFI…LYSI and GINI…IPLF.

The protein localises to the membrane. This is an uncharacterized protein from Schizosaccharomyces pombe (strain 972 / ATCC 24843) (Fission yeast).